A 639-amino-acid polypeptide reads, in one-letter code: Polyphenol oxidase, chloroplastic (639 aa).

The N-terminal 101 residues, Met-1 to Ala-101, are a transit peptide targeting the chloroplast. Positions Gly-35 to Gln-58 are disordered. Disulfide bonds link Cys-111-Cys-127 and Cys-126-Cys-194. 6 residues coordinate Cu cation: His-193, His-214, His-223, His-354, His-358, and His-388. The 2'-(S-cysteinyl)-histidine (Cys-His) cross-link spans Cys-197–His-214.

The protein belongs to the tyrosinase family. Requires Cu(2+) as cofactor.

It is found in the plastid. Its subcellular location is the chloroplast thylakoid lumen. It carries out the reaction 2 catechol + O2 = 2 1,2-benzoquinone + 2 H2O. In terms of biological role, catalyzes the oxidation of mono- and o-diphenols to o-diquinones. This chain is Polyphenol oxidase, chloroplastic, found in Spinacia oleracea (Spinach).